We begin with the raw amino-acid sequence, 201 residues long: Ribonuclease HII (201 aa).

The region spanning 12 to 201 is the RNase H type-2 domain; sequence GIVCGIDEVG…FAPVAQYMLF (190 aa). Asp18, Glu19, and Asp113 together coordinate a divalent metal cation.

It belongs to the RNase HII family. It depends on Mn(2+) as a cofactor. Requires Mg(2+) as cofactor.

The protein localises to the cytoplasm. It catalyses the reaction Endonucleolytic cleavage to 5'-phosphomonoester.. Endonuclease that specifically degrades the RNA of RNA-DNA hybrids. The sequence is that of Ribonuclease HII (rnhB) from Paramagnetospirillum magneticum (strain ATCC 700264 / AMB-1) (Magnetospirillum magneticum).